Here is a 27-residue protein sequence, read N- to C-terminus: Conotoxin Bt9.2 (27 aa).

3 disulfides stabilise this stretch: C2-C16, C6-C19, and C12-C24. P13 is modified (4-hydroxyproline).

As to expression, expressed by the venom duct.

The protein resides in the secreted. In terms of biological role, probable neurotoxin that inhibits ion channels. In Conus betulinus (Beech cone), this protein is Conotoxin Bt9.2.